We begin with the raw amino-acid sequence, 356 residues long: MTSQAALKLVAKEEGDKQRALEAALAQIDRAFGKGSVMKLGEKGKVEIESVSTGSLGLDIALGIGGLPKGRIVEVYGPESSGKTTLALHVVAEVQKAGGTAAFVDAEHALDPSYAYKLGVNLDNLLVSQPDNGEQALEITDTLVRSGAVDIVVVDSVAALTPKAEIEGEMGDSLPGLQARLMSQALRKLTASINKANTIVIFINQIRHKIGVMYGSPETTTGGNALKFYASVRLDIRRTGSVKARDEIVGNNVRVKVVKNKVAPPFREVEFDIMYGEGISKLGEVIDLGVKAGIIDKAGSWFSYGSQRIGQGRDNVREFLKNNPDVAADIEKAVRKSSQKIEEELLVGGPEEGEED.

Residue 77-84 coordinates ATP; it reads GPESSGKT.

It belongs to the RecA family.

It localises to the cytoplasm. Its function is as follows. Can catalyze the hydrolysis of ATP in the presence of single-stranded DNA, the ATP-dependent uptake of single-stranded DNA by duplex DNA, and the ATP-dependent hybridization of homologous single-stranded DNAs. It interacts with LexA causing its activation and leading to its autocatalytic cleavage. The polypeptide is Protein RecA (Caulobacter vibrioides (strain ATCC 19089 / CIP 103742 / CB 15) (Caulobacter crescentus)).